The following is a 343-amino-acid chain: 4-hydroxy-2-oxovalerate aldolase (343 aa).

Positions 5–256 (ILLCDPTLRD…ETGIDLYKIL (252 aa)) constitute a Pyruvate carboxyltransferase domain. Substrate is bound at residue 13 to 14 (RD). Asp-14 contributes to the Mn(2+) binding site. The Proton acceptor role is filled by His-17. The substrate site is built by Ser-168 and His-195. Mn(2+) is bound by residues His-195 and His-197.

Belongs to the 4-hydroxy-2-oxovalerate aldolase family. As to quaternary structure, interacts with MhpF.

It carries out the reaction (S)-4-hydroxy-2-oxopentanoate = acetaldehyde + pyruvate. It functions in the pathway aromatic compound metabolism; 3-phenylpropanoate degradation. Functionally, catalyzes the retro-aldol cleavage of 4-hydroxy-2-oxopentanoate to pyruvate and acetaldehyde. Is involved in the meta-cleavage pathway for the degradation of aromatic compounds. The chain is 4-hydroxy-2-oxovalerate aldolase from Pectobacterium atrosepticum (strain SCRI 1043 / ATCC BAA-672) (Erwinia carotovora subsp. atroseptica).